A 389-amino-acid chain; its full sequence is S-adenosylmethionine synthase (389 aa).

His-17 contributes to the ATP binding site. Mg(2+) is bound at residue Asp-19. Position 45 (Glu-45) interacts with K(+). L-methionine contacts are provided by Glu-58 and Gln-101. Residues 101-111 (QSPDIGQGVDV) are flexible loop. Residues 160 to 162 (DGK), 226 to 227 (RF), Asp-235, 241 to 242 (RK), Ala-258, and Lys-262 each bind ATP. Asp-235 lines the L-methionine pocket. Lys-266 is an L-methionine binding site.

The protein belongs to the AdoMet synthase family. Homotetramer; dimer of dimers. The cofactor is Mg(2+). It depends on K(+) as a cofactor.

The protein localises to the cytoplasm. It carries out the reaction L-methionine + ATP + H2O = S-adenosyl-L-methionine + phosphate + diphosphate. It functions in the pathway amino-acid biosynthesis; S-adenosyl-L-methionine biosynthesis; S-adenosyl-L-methionine from L-methionine: step 1/1. Functionally, catalyzes the formation of S-adenosylmethionine (AdoMet) from methionine and ATP. The overall synthetic reaction is composed of two sequential steps, AdoMet formation and the subsequent tripolyphosphate hydrolysis which occurs prior to release of AdoMet from the enzyme. The polypeptide is S-adenosylmethionine synthase (Anaeromyxobacter sp. (strain Fw109-5)).